Reading from the N-terminus, the 238-residue chain is Ribonuclease 3 (238 aa).

The RNase III domain occupies 4–130; it reads IQTLFQTLNI…LFGAIYLDLG (127 aa). Glu45 is a binding site for Mg(2+). Residue Asp49 is part of the active site. Mg(2+) contacts are provided by Asp116 and Glu119. Glu119 is a catalytic residue. Residues 154 to 222 form the DRBM domain; it reads DFKTQLQEIV…AQQALSKVAK (69 aa). The interval 215 to 238 is disordered; that stretch reads QALSKVAKPKDLLNNKGGKEKELQ. Residues 222-238 show a composition bias toward basic and acidic residues; the sequence is KPKDLLNNKGGKEKELQ.

This sequence belongs to the ribonuclease III family. As to quaternary structure, homodimer. Requires Mg(2+) as cofactor.

The protein resides in the cytoplasm. It catalyses the reaction Endonucleolytic cleavage to 5'-phosphomonoester.. Digests double-stranded RNA. Involved in the processing of primary rRNA transcript to yield the immediate precursors to the large and small rRNAs (23S and 16S). Processes some mRNAs, and tRNAs when they are encoded in the rRNA operon. Processes pre-crRNA and tracrRNA of type II CRISPR loci if present in the organism. This chain is Ribonuclease 3, found in Onion yellows phytoplasma (strain OY-M).